A 216-amino-acid polypeptide reads, in one-letter code: Ethylene-inducing xylanase (216 aa).

The N-terminal stretch at Met1 to Ala19 is a signal peptide. The GH11 domain occupies Ala28–Ser216. Residue Glu112 is the Nucleophile of the active site. Glu203 functions as the Proton donor in the catalytic mechanism.

The protein belongs to the glycosyl hydrolase 11 (cellulase G) family.

Its subcellular location is the secreted. The enzyme catalyses Endohydrolysis of (1-&gt;4)-beta-D-xylosidic linkages in xylans.. It participates in glycan degradation; xylan degradation. Endo-1,4-beta-xylanase involved in the hydrolysis of xylan, a major structural heterogeneous polysaccharide found in plant biomass representing the second most abundant polysaccharide in the biosphere, after cellulose. Acts as a pathogen-associated molecular pattern (PAMP) that can trigger plant cell death. Triggers a series of immune responses in citrus fruit and enhanced the resistance of citrus and other fruit against fungal pathogens. In Penicillium digitatum (strain Pd1 / CECT 20795) (Green mold), this protein is Ethylene-inducing xylanase.